We begin with the raw amino-acid sequence, 1226 residues long: Methionine synthase (1226 aa).

The Hcy-binding domain occupies 6-326 (RQQLEQQLKQ…EHIAAIAKAV (321 aa)). Zn(2+) contacts are provided by cysteine 248, cysteine 311, and cysteine 312. In terms of domain architecture, Pterin-binding spans 357–618 (FVNVGERTNV…VPLKLREAVE (262 aa)). A B12-binding N-terminal domain is found at 651 to 745 (SALEWRAWPV…FINAQKSGST (95 aa)). Methylcob(III)alamin contacts are provided by residues glutamate 695, 757–761 (GDVHD), histidine 760, serine 805, threonine 809, and alanine 861. The region spanning 747 to 882 (NGKILLATVK…SDEQRPGFIE (136 aa)) is the B12-binding domain. Residues 898 to 1226 (KTPKSRPVTL…EKWLAPNLDA (329 aa)) enclose the AdoMet activation domain. Residues aspartate 948, arginine 1136, and 1191–1192 (YF) contribute to the S-adenosyl-L-methionine site.

This sequence belongs to the vitamin-B12 dependent methionine synthase family. Methylcob(III)alamin is required as a cofactor. It depends on Zn(2+) as a cofactor.

The enzyme catalyses (6S)-5-methyl-5,6,7,8-tetrahydrofolate + L-homocysteine = (6S)-5,6,7,8-tetrahydrofolate + L-methionine. It participates in amino-acid biosynthesis; L-methionine biosynthesis via de novo pathway; L-methionine from L-homocysteine (MetH route): step 1/1. Functionally, catalyzes the transfer of a methyl group from methyl-cobalamin to homocysteine, yielding enzyme-bound cob(I)alamin and methionine. Subsequently, remethylates the cofactor using methyltetrahydrofolate. The polypeptide is Methionine synthase (metH) (Vibrio cholerae serotype O1 (strain ATCC 39315 / El Tor Inaba N16961)).